We begin with the raw amino-acid sequence, 347 residues long: Quinolinate synthase (347 aa).

Residues His-47 and Ser-68 each coordinate iminosuccinate. Cys-113 serves as a coordination point for [4Fe-4S] cluster. Residues 139–141 (YAN) and Ser-156 contribute to the iminosuccinate site. Position 200 (Cys-200) interacts with [4Fe-4S] cluster. Iminosuccinate is bound by residues 226-228 (HPE) and Thr-243. Cys-297 lines the [4Fe-4S] cluster pocket.

Belongs to the quinolinate synthase family. Type 1 subfamily. The cofactor is [4Fe-4S] cluster.

The protein localises to the cytoplasm. The catalysed reaction is iminosuccinate + dihydroxyacetone phosphate = quinolinate + phosphate + 2 H2O + H(+). The protein operates within cofactor biosynthesis; NAD(+) biosynthesis; quinolinate from iminoaspartate: step 1/1. Functionally, catalyzes the condensation of iminoaspartate with dihydroxyacetone phosphate to form quinolinate. This chain is Quinolinate synthase, found in Shigella boydii serotype 18 (strain CDC 3083-94 / BS512).